The following is a 441-amino-acid chain: Ribosomal protein uS12 methylthiotransferase RimO (441 aa).

The MTTase N-terminal domain occupies 7–117 (ASIAMISLGC…VVLEVHRAAP (111 aa)). Residues Cys-16, Cys-52, Cys-81, Cys-150, Cys-154, and Cys-157 each contribute to the [4Fe-4S] cluster site. The Radical SAM core domain maps to 136–373 (LTPRHYAYLK…MAHQQAISAA (238 aa)). The TRAM domain maps to 376–441 (QTRVGREIDV…DEYDLHGDAV (66 aa)).

Belongs to the methylthiotransferase family. RimO subfamily. [4Fe-4S] cluster serves as cofactor.

It localises to the cytoplasm. The catalysed reaction is L-aspartate(89)-[ribosomal protein uS12]-hydrogen + (sulfur carrier)-SH + AH2 + 2 S-adenosyl-L-methionine = 3-methylsulfanyl-L-aspartate(89)-[ribosomal protein uS12]-hydrogen + (sulfur carrier)-H + 5'-deoxyadenosine + L-methionine + A + S-adenosyl-L-homocysteine + 2 H(+). Its function is as follows. Catalyzes the methylthiolation of an aspartic acid residue of ribosomal protein uS12. In Bordetella petrii (strain ATCC BAA-461 / DSM 12804 / CCUG 43448), this protein is Ribosomal protein uS12 methylthiotransferase RimO.